The primary structure comprises 871 residues: MGDSDDEYDRRRRDKFRRERSDYDRSRERDERRRGDDWNDREWDHGRERRSRGEYRDYDRNRRERFSPPRHELSPPQKRMRRDWDGHSSDPYHSGYEMPYAGGGGGPTYGPPQPWGHPGVHIMQHHVLPIQARLGSIAEIDLGVPPPVMKTFKEFLLSLDDSVDETEAVKRYNDYKLDFRRQQMQDFFLAHKDEEWFRSKYHPDEVGKRRQEARGALQNRLRVFLSLMETGWFDNLLLDIDKADAIVKMLDAAVIKMEGGTENDLRILEQEEEEEQAGKPGEPGKKEEGRAGAGLGDGERKTNDKDEKKEDSKQAENDSSNDDKTKKSEGDGDKEEKKEDSEKEAKKSSKKRNRKHSGDDSFDEGSMSESESESESGQAEEEKEEAEALKEKEKPKEEEWEKPKDAAGLECKPRPLHKTCSLFMRNIAPNISRAEIISLCKRYPGFMRVALSEPQPERRFFRRGWVTFDRSVNIKEICWNLQNIRLRECELSPGVNRDLTRRVRNINGITQHKQIVRNDIKLAAKLIHTLDDRTQLWASEPGTPPLPTSLPSQNPILKNITDYLIEEVSAEEEELLGSSGGAPPEEPPKEGNPAEINVERDEKLIKVLDKLLLYLRIVHSLDYYNTCEYPNEDEMPNRCGIIHVRGPMPPNRISHGEVLEWQKTFEEKLTPLLSVRESLSEEEAQKMGRKDPEQEVEKFVTSNTQELGKDKWLCPLSGKKFKGPEFVRKHIFNKHAEKIEEVKKEVAFFNNFLTDAKRPALPEIKPAQPPGPAQSLTPGLPYPHQTPQGLMPYGQPRPPILGYGAGAVRPAVPTGGPPYPHAPYGAGRGNYDAFRGQGGYPGKPRNRMVRGDPRAIVEYRDLDAPDDVDFF.

The segment at 1–90 (MGDSDDEYDR…RRDWDGHSSD (90 aa)) is disordered. Position 2 is an N-acetylglycine (Gly-2). A Phosphoserine modification is found at Ser-4. Residue Tyr-8 is modified to Phosphotyrosine. A compositionally biased stretch (basic and acidic residues) spans 8–73 (YDRRRRDKFR…ERFSPPRHEL (66 aa)). Ser-67, Ser-74, and Ser-136 each carry phosphoserine. A Glycyl lysine isopeptide (Lys-Gly) (interchain with G-Cter in SUMO2) cross-link involves residue Lys-150. A disordered region spans residues 272 to 411 (EEEEQAGKPG…KPKDAAGLEC (140 aa)). Basic and acidic residues predominate over residues 297-347 (DGERKTNDKDEKKEDSKQAENDSSNDDKTKKSEGDGDKEEKKEDSEKEAKK). Acidic residues predominate over residues 370-385 (SESESESGQAEEEKEE). A compositionally biased stretch (basic and acidic residues) spans 386–411 (AEALKEKEKPKEEEWEKPKDAAGLEC). A phosphoserine mark is found at Ser-492 and Ser-539. Thr-543 carries the phosphothreonine modification. Residue Ser-569 is modified to Phosphoserine. A disordered region spans residues 574 to 597 (ELLGSSGGAPPEEPPKEGNPAEIN). Thr-670 is modified (phosphothreonine). Position 678 is a phosphoserine (Ser-678). Omega-N-methylarginine occurs at positions 828, 835, and 845. Positions 830–849 (NYDAFRGQGGYPGKPRNRMV) are disordered.

This sequence belongs to the ARS2 family. In terms of assembly, interacts with CASP8AP2, ERBB4, NCBP1/CBP80 and DROSHA. Interacts with LUZP4. Interacts with NCBP2/CBP20 and NCBP3. Interacts with MTREX.

The protein resides in the nucleus. It is found in the nucleoplasm. It localises to the cytoplasm. Functionally, acts as a mediator between the cap-binding complex (CBC) and the primary microRNAs (miRNAs) processing machinery during cell proliferation. Contributes to the stability and delivery of capped primary miRNA transcripts to the primary miRNA processing complex containing DGCR8 and DROSHA, thereby playing a role in RNA-mediated gene silencing (RNAi) by miRNAs. Binds capped RNAs (m7GpppG-capped RNA); however interaction is probably mediated via its interaction with NCBP1/CBP80 component of the CBC complex. Involved in cell cycle progression at S phase. Does not directly confer arsenite resistance but rather modulates arsenic sensitivity. Independently of its activity on miRNAs, necessary and sufficient to promote neural stem cell self-renewal. Does so by directly binding SOX2 promoter and positively regulating its transcription. This Pongo abelii (Sumatran orangutan) protein is Serrate RNA effector molecule homolog (SRRT).